The primary structure comprises 850 residues: PH domain-containing protein YHR131C (850 aa).

The PH domain maps to 194 to 306 (RIHSDLVHRS…MYLSIGISVS (113 aa)). Residues 324-338 (RRRRRRRRRRRRHTH) are compositionally biased toward basic residues. 5 disordered regions span residues 324-348 (RRRR…GSFS), 406-428 (SAAS…SGCS), 451-494 (SSRT…GVPV), 583-659 (EASI…TDDS), and 793-850 (TTKD…QITA). The span at 406–416 (SAASGESSDNS) shows a compositional bias: low complexity. Residues 417–428 (TLGSTRSLSGCS) show a composition bias toward polar residues. Residues 479–489 (HHESSGGDHPE) are compositionally biased toward basic and acidic residues. The span at 605 to 619 (ESATDLSQSSRSLCL) shows a compositional bias: polar residues. Composition is skewed to acidic residues over residues 626–658 (INDD…DTDD) and 799–850 (DHGE…QITA).

The protein resides in the cytoplasm. The polypeptide is PH domain-containing protein YHR131C (Saccharomyces cerevisiae (strain ATCC 204508 / S288c) (Baker's yeast)).